A 462-amino-acid chain; its full sequence is Nitrogenase iron-iron protein beta chain (462 aa).

4 residues coordinate [8Fe-7S] cluster: Cys-20, Cys-45, Cys-104, and Ser-143.

Belongs to the NifD/NifK/NifE/NifN family. As to quaternary structure, hexamer of two alpha, two beta, and two delta chains. Requires [8Fe-7S] cluster as cofactor.

It carries out the reaction N2 + 8 reduced [2Fe-2S]-[ferredoxin] + 16 ATP + 16 H2O = H2 + 8 oxidized [2Fe-2S]-[ferredoxin] + 2 NH4(+) + 16 ADP + 16 phosphate + 6 H(+). In terms of biological role, this iron-iron protein is part of the nitrogenase complex that catalyzes the key enzymatic reactions in nitrogen fixation. Other nitrogenase complexes utilize a molybdenum-iron protein or a vanadium-iron protein. The sequence is that of Nitrogenase iron-iron protein beta chain (anfK) from Azotobacter vinelandii.